The primary structure comprises 166 residues: Urease accessory protein UreE (166 aa).

The protein belongs to the UreE family.

It is found in the cytoplasm. Involved in urease metallocenter assembly. Binds nickel. Probably functions as a nickel donor during metallocenter assembly. This Pseudomonas fluorescens (strain Pf0-1) protein is Urease accessory protein UreE.